Consider the following 329-residue polypeptide: Peroxidase 56 (329 aa).

The N-terminal stretch at 1-31 is a signal peptide; the sequence is MAALKMTISCFLFLQVIYCLLSSFAPTNVQG. Intrachain disulfides connect C41/C119, C74/C79, C125/C325, and C204/C236. Catalysis depends on H72, which acts as the Proton acceptor. Ca(2+) contacts are provided by D73, V76, G78, E80, and S82. An N-linked (GlcNAc...) asparagine glycan is attached at N158. Residue P167 coordinates substrate. The N-linked (GlcNAc...) asparagine glycan is linked to N172. H197 provides a ligand contact to heme b. T198 lines the Ca(2+) pocket. N213 is a glycosylation site (N-linked (GlcNAc...) asparagine). Ca(2+) contacts are provided by D248, S251, and D256.

This sequence belongs to the peroxidase family. Classical plant (class III) peroxidase subfamily. The cofactor is heme b. Requires Ca(2+) as cofactor.

The protein resides in the secreted. It carries out the reaction 2 a phenolic donor + H2O2 = 2 a phenolic radical donor + 2 H2O. Removal of H(2)O(2), oxidation of toxic reductants, biosynthesis and degradation of lignin, suberization, auxin catabolism, response to environmental stresses such as wounding, pathogen attack and oxidative stress. These functions might be dependent on each isozyme/isoform in each plant tissue. The chain is Peroxidase 56 (PER56) from Arabidopsis thaliana (Mouse-ear cress).